Consider the following 138-residue polypeptide: uncharacterized protein (138 aa).

The protein belongs to the IIV-3 015R family.

This is an uncharacterized protein from Simulium iridescent virus (IIV-22).